Here is a 158-residue protein sequence, read N- to C-terminus: SsrA-binding protein (158 aa).

The disordered stretch occupies residues 133-158 (QLHDKRETEKKRDWNKEKGRLLRDKH).

It belongs to the SmpB family.

It is found in the cytoplasm. In terms of biological role, required for rescue of stalled ribosomes mediated by trans-translation. Binds to transfer-messenger RNA (tmRNA), required for stable association of tmRNA with ribosomes. tmRNA and SmpB together mimic tRNA shape, replacing the anticodon stem-loop with SmpB. tmRNA is encoded by the ssrA gene; the 2 termini fold to resemble tRNA(Ala) and it encodes a 'tag peptide', a short internal open reading frame. During trans-translation Ala-aminoacylated tmRNA acts like a tRNA, entering the A-site of stalled ribosomes, displacing the stalled mRNA. The ribosome then switches to translate the ORF on the tmRNA; the nascent peptide is terminated with the 'tag peptide' encoded by the tmRNA and targeted for degradation. The ribosome is freed to recommence translation, which seems to be the essential function of trans-translation. This Beijerinckia indica subsp. indica (strain ATCC 9039 / DSM 1715 / NCIMB 8712) protein is SsrA-binding protein.